The following is a 186-amino-acid chain: Elongation factor P (186 aa).

Belongs to the elongation factor P family.

It is found in the cytoplasm. It functions in the pathway protein biosynthesis; polypeptide chain elongation. Functionally, involved in peptide bond synthesis. Stimulates efficient translation and peptide-bond synthesis on native or reconstituted 70S ribosomes in vitro. Probably functions indirectly by altering the affinity of the ribosome for aminoacyl-tRNA, thus increasing their reactivity as acceptors for peptidyl transferase. This is Elongation factor P from Shewanella loihica (strain ATCC BAA-1088 / PV-4).